We begin with the raw amino-acid sequence, 377 residues long: Ribosomal RNA large subunit methyltransferase G (377 aa).

Belongs to the methyltransferase superfamily. RlmG family.

It localises to the cytoplasm. The enzyme catalyses guanosine(1835) in 23S rRNA + S-adenosyl-L-methionine = N(2)-methylguanosine(1835) in 23S rRNA + S-adenosyl-L-homocysteine + H(+). Its function is as follows. Specifically methylates the guanine in position 1835 (m2G1835) of 23S rRNA. This is Ribosomal RNA large subunit methyltransferase G from Shewanella sp. (strain MR-4).